Here is a 69-residue protein sequence, read N- to C-terminus: U-Asilidin(12)-Dg3a (69 aa).

The signal sequence occupies residues 1-19 (MRFLNIFLFFAAIIAFATA). Residues 20–33 (SQVFEEDEIDMEPR) constitute a propeptide that is removed on maturation. 3 disulfide bridges follow: Cys-36–Cys-59, Cys-45–Cys-65, and Cys-49–Cys-67.

Belongs to the asilidin-12 family. Expressed by the venom gland.

It localises to the secreted. Its function is as follows. Moderately increases Kv11.1/KCNH2/ERG1 currents and shifts the voltage-dependence of the channel activation to hyperpolarised potentials. In vivo, induces neurotoxic effects when injected into insects (tested on L.cuprina and A.domesticus). In Dolopus genitalis (Giant Australian assassin fly), this protein is U-Asilidin(12)-Dg3a.